Consider the following 346-residue polypeptide: MGQDLPLLLSAALGKKVNRPPVWMMRQAGRYMKIYRDLRERYPSFRERSENPELSYEISMQPFHAFKPDGVILFSDILTPLPGMGINFEIIESKGPIIEDPIRTLNQVENLRELNPSESLSFVGQVLSSLKKDVNNEATILGFVGAPWTLAAYVVEGKSSKNYSLIKSMAFNEPDLLHKLLDHFAKSIGEYLKYQIKSGAQVVQIFDSWAGQLSPQDYDMFAGPYQKKVVEIVKAEYPETPIILYISGSAGVLERMAKTGVDIISLDWTVDIEEACKRIPRGIGIQGNVDPGILFGNKKSIKERIDDTFNKIKDRKYILNLGHGILPGTPEENAQTFFEHGKKLTY.

Residues Arg-26 to Arg-30, Asp-76, Tyr-153, Ser-208, and His-323 contribute to the substrate site.

Belongs to the uroporphyrinogen decarboxylase family. Homodimer.

The protein localises to the cytoplasm. It carries out the reaction uroporphyrinogen III + 4 H(+) = coproporphyrinogen III + 4 CO2. It participates in porphyrin-containing compound metabolism; protoporphyrin-IX biosynthesis; coproporphyrinogen-III from 5-aminolevulinate: step 4/4. In terms of biological role, catalyzes the decarboxylation of four acetate groups of uroporphyrinogen-III to yield coproporphyrinogen-III. In Prochlorococcus marinus (strain AS9601), this protein is Uroporphyrinogen decarboxylase.